A 234-amino-acid polypeptide reads, in one-letter code: Endonuclease V (234 aa).

Residues Asp-36 and Asp-104 each coordinate Mg(2+).

The protein belongs to the endonuclease V family. It depends on Mg(2+) as a cofactor.

It is found in the cytoplasm. The catalysed reaction is Endonucleolytic cleavage at apurinic or apyrimidinic sites to products with a 5'-phosphate.. Functionally, DNA repair enzyme involved in the repair of deaminated bases. Selectively cleaves double-stranded DNA at the second phosphodiester bond 3' to a deoxyinosine leaving behind the intact lesion on the nicked DNA. This Yersinia pestis protein is Endonuclease V.